The following is a 176-amino-acid chain: Tubulin polymerization-promoting protein family member 3 (176 aa).

Position 2 is an N-acetylalanine (alanine 2). A disordered region spans residues 132-152 (TGSHKERFDESGKGKGIAGRQ). Residues 134–144 (SHKERFDESGK) show a composition bias toward basic and acidic residues.

Belongs to the TPPP family.

It localises to the cytoplasm. Its subcellular location is the cytoskeleton. Regulator of microtubule dynamic that has microtubule bundling activity. Required for embryo implantation; possibly by regulating beta-catenin. Also required for decidualization via regulation of beta-catenin. This chain is Tubulin polymerization-promoting protein family member 3, found in Mus musculus (Mouse).